The following is a 154-amino-acid chain: Transcriptional repressor NrdR (154 aa).

The segment at 3-34 (CPFCGNENTRVIDTRAAEDGFAIKRRRECENC) is a zinc-finger region. The ATP-cone domain occupies 49–139 (LIVVKKDGSK…VYRQFKDVNS (91 aa)).

Belongs to the NrdR family. The cofactor is Zn(2+).

In terms of biological role, negatively regulates transcription of bacterial ribonucleotide reductase nrd genes and operons by binding to NrdR-boxes. This chain is Transcriptional repressor NrdR, found in Carboxydothermus hydrogenoformans (strain ATCC BAA-161 / DSM 6008 / Z-2901).